The primary structure comprises 92 residues: Co-chaperonin GroES (92 aa).

Belongs to the GroES chaperonin family. Heptamer of 7 subunits arranged in a ring. Interacts with the chaperonin GroEL.

The protein resides in the cytoplasm. In terms of biological role, together with the chaperonin GroEL, plays an essential role in assisting protein folding. The GroEL-GroES system forms a nano-cage that allows encapsulation of the non-native substrate proteins and provides a physical environment optimized to promote and accelerate protein folding. GroES binds to the apical surface of the GroEL ring, thereby capping the opening of the GroEL channel. The protein is Co-chaperonin GroES of Methanosarcina barkeri (strain Fusaro / DSM 804).